The chain runs to 286 residues: UPF0173 metal-dependent hydrolase RALTA_A1748 (286 aa).

Belongs to the UPF0173 family.

This Cupriavidus taiwanensis (strain DSM 17343 / BCRC 17206 / CCUG 44338 / CIP 107171 / LMG 19424 / R1) (Ralstonia taiwanensis (strain LMG 19424)) protein is UPF0173 metal-dependent hydrolase RALTA_A1748.